A 383-amino-acid polypeptide reads, in one-letter code: Nuclear hormone receptor family member nhr-217 (383 aa).

The nuclear receptor DNA-binding region spans 53–127 (IPACPVCDVP…AGLQRDYVRQ (75 aa)). NR C4-type zinc fingers lie at residues 56–77 (CPVCDVPCRIEPHFGGIACAAC) and 93–109 (CKREKLCRKARKSCRAC). The NR LBD domain maps to 172 to 383 (ILKVSNSSLF…KLYVQIGIPF (212 aa)).

This sequence belongs to the nuclear hormone receptor family.

The protein localises to the nucleus. Its function is as follows. Orphan nuclear receptor. The protein is Nuclear hormone receptor family member nhr-217 (nhr-217) of Caenorhabditis elegans.